Reading from the N-terminus, the 1004-residue chain is Ephrin type-A receptor 8 (1004 aa).

A signal peptide spans 1 to 26 (MAPARARLSPALWVVTAAAAATCVSA). The Extracellular segment spans residues 27 to 541 (GRGEVNLLDT…KPRPRYDTRT (515 aa)). One can recognise an Eph LBD domain in the interval 30–208 (EVNLLDTSTI…YYKKCPAMVR (179 aa)). Fibronectin type-III domains follow at residues 327–437 (PPSA…TNQA) and 438–533 (APSQ…TGKP). Residues Asn-339, Asn-406, and Asn-431 are each glycosylated (N-linked (GlcNAc...) asparagine). Residues 542–562 (IVWICLTLITGLVVLLLLLIC) traverse the membrane as a helical segment. The interval 563–569 (KKRHCGY) is mediates interaction with ANKS1A and ANKS1B. At 563 to 1004 (KKRHCGYSKA…SSTQGPRRHL (442 aa)) the chain is on the cytoplasmic side. Positions 588–643 (APPPVFLPLNHPPGKFPETQFSAEPHTYEEPGRAGRSFTREIEASRIHIEKIIGSG) are mediates interaction with PIK3CG and required for endocytosis. Position 615 is a phosphotyrosine; by autocatalysis (Tyr-615). Residues 634 to 895 (IHIEKIIGSG…HVVSVLDALV (262 aa)) enclose the Protein kinase domain. ATP-binding positions include 640-648 (IGSGESGEV) and Lys-666. The Proton acceptor role is filled by Asp-759. Phosphotyrosine; by autocatalysis is present on Tyr-838. The SAM domain occupies 929 to 993 (NGDLTVGDWL…LGSIQTMRAQ (65 aa)). Residues 1002 to 1004 (RHL) carry the PDZ-binding motif.

Belongs to the protein kinase superfamily. Tyr protein kinase family. Ephrin receptor subfamily. In terms of assembly, heterotetramer upon binding of the ligand. The heterotetramer is composed of an ephrin dimer and a receptor dimer. Oligomerization is probably required to induce biological responses. May also form heterodimers with other ephrin receptors. Interacts with FYN; possible downstream effector of EPHA8 in regulation of cell adhesion. Interacts with PIK3CG; regulates integrin-mediated cell adhesion to substrate. Interacts with TIAM1; regulates clathrin-mediated endocytosis of EPHA8. Interacts with ANKS1A and ANKS1B; EPHA8 kinase activity-independent but stimulated by EPHA8 ubiquitination. Phosphorylated. Phosphorylation is stimulated upon binding of its ligands including EFNA2, EFNA3 and EFNA5. Autophosphorylation on Tyr-615 is critical for association with FYN. Autophosphorylation on Tyr-838 modulates tyrosine kinase activity. In terms of processing, ubiquitinated. Ubiquitination by CBL regulates the receptor stability and activity through proteasomal degradation. ANKS1A prevents ubiquitination and degradation. As to expression, specifically expressed in the central nervous system.

The protein localises to the cell membrane. Its subcellular location is the cell projection. It is found in the early endosome membrane. It catalyses the reaction L-tyrosyl-[protein] + ATP = O-phospho-L-tyrosyl-[protein] + ADP + H(+). In terms of biological role, receptor tyrosine kinase which binds promiscuously GPI-anchored ephrin-A family ligands residing on adjacent cells, leading to contact-dependent bidirectional signaling into neighboring cells. The signaling pathway downstream of the receptor is referred to as forward signaling while the signaling pathway downstream of the ephrin ligand is referred to as reverse signaling. The GPI-anchored ephrin-A EFNA2, EFNA3, and EFNA5 are able to activate EPHA8 through phosphorylation. With EFNA5 may regulate integrin-mediated cell adhesion and migration on fibronectin substrate but also neurite outgrowth. During development of the nervous system also plays a role in axon guidance. Downstream effectors of the EPHA8 signaling pathway include FYN which promotes cell adhesion upon activation by EPHA8 and the MAP kinases in the stimulation of neurite outgrowth. The polypeptide is Ephrin type-A receptor 8 (Epha8) (Mus musculus (Mouse)).